Here is a 274-residue protein sequence, read N- to C-terminus: tRNA (cytosine(48)-C(5))-methyltransferase (274 aa).

Residues 91 to 97 (CAAPGGK), Glu115, Arg120, Asp142, Asp163, Asn169, and Arg189 contribute to the S-adenosyl-L-methionine site. Cys212 (nucleophile) is an active-site residue.

This sequence belongs to the class I-like SAM-binding methyltransferase superfamily. RsmB/NOP family.

It is found in the cytoplasm. The enzyme catalyses cytidine(48) in tRNA precursor + S-adenosyl-L-methionine = 5-methylcytidine(48) in tRNA precursor + S-adenosyl-L-homocysteine + H(+). It catalyses the reaction cytidine(40) in tRNA precursor + S-adenosyl-L-methionine = 5-methylcytidine(40) in tRNA precursor + S-adenosyl-L-homocysteine + H(+). In terms of biological role, catalyzes AdoMet-dependent formation of m5C in tRNA. Cytidine residue at either position 40 or position 48 is likely to be methylated. This chain is tRNA (cytosine(48)-C(5))-methyltransferase (trm4), found in Methanocaldococcus jannaschii (strain ATCC 43067 / DSM 2661 / JAL-1 / JCM 10045 / NBRC 100440) (Methanococcus jannaschii).